A 177-amino-acid chain; its full sequence is MASSMMASTAAVARAGPAQSNMVAPFNGLRSSVAFPATRKANKNLSTLPSNGGKVSCMQVWPPEGLKKFETLSYLPPLSVEDLAKEVDYLLRNDWVPCIEFSKEGFVYRENHASPGYYDGRYWTMWKLPMFGCTDASQVIAEVEEAKKAYPEYFVRIIGFDNKRQVQCISFIAYKPT.

The transit peptide at 1 to 56 (MASSMMASTAAVARAGPAQSNMVAPFNGLRSSVAFPATRKANKNLSTLPSNGGKVS) directs the protein to the chloroplast.

This sequence belongs to the RuBisCO small chain family. In terms of assembly, heterohexadecamer of 8 large and 8 small subunits.

Its subcellular location is the plastid. It is found in the chloroplast. In terms of biological role, ruBisCO catalyzes two reactions: the carboxylation of D-ribulose 1,5-bisphosphate, the primary event in carbon dioxide fixation, as well as the oxidative fragmentation of the pentose substrate. Both reactions occur simultaneously and in competition at the same active site. Although the small subunit is not catalytic it is essential for maximal activity. This is Ribulose bisphosphate carboxylase small subunit, chloroplastic 2 from Lemna gibba (Swollen duckweed).